The chain runs to 72 residues: Large ribosomal subunit protein bL31 (72 aa).

Residues cysteine 16, cysteine 18, cysteine 38, and cysteine 41 each contribute to the Zn(2+) site.

Belongs to the bacterial ribosomal protein bL31 family. Type A subfamily. As to quaternary structure, part of the 50S ribosomal subunit. Zn(2+) serves as cofactor.

Its function is as follows. Binds the 23S rRNA. This Vibrio cholerae serotype O1 (strain ATCC 39541 / Classical Ogawa 395 / O395) protein is Large ribosomal subunit protein bL31.